A 236-amino-acid chain; its full sequence is MLTRKQYDLLRFIHERLKETGVPPSFDEMKEALDLRSKSGIHRLITALEERGFIRRLPNRARALEVVRLPDSAAPGLAAARSGGRGFSPSVIEGSLGRVRPVVDDEEPAAVVAVPVMGRIAAGSPISAIQTRSNTLNLPPEMLGTGEHFALEVRGDSMIEAGILDGDTVLIRKCDTADTGDIIVALVDDEEATLKRLRRKGASIALEAANPAYETRIFGPDRVRIQGRLVGLIRRY.

The H-T-H motif DNA-binding region spans 26-46; that stretch reads FDEMKEALDLRSKSGIHRLIT. Active-site for autocatalytic cleavage activity residues include serine 157 and lysine 195.

It belongs to the peptidase S24 family. Homodimer.

It carries out the reaction Hydrolysis of Ala-|-Gly bond in repressor LexA.. Represses a number of genes involved in the response to DNA damage (SOS response), including recA and lexA. In the presence of single-stranded DNA, RecA interacts with LexA causing an autocatalytic cleavage which disrupts the DNA-binding part of LexA, leading to derepression of the SOS regulon and eventually DNA repair. In Azorhizobium caulinodans (strain ATCC 43989 / DSM 5975 / JCM 20966 / LMG 6465 / NBRC 14845 / NCIMB 13405 / ORS 571), this protein is LexA repressor.